We begin with the raw amino-acid sequence, 105 residues long: Protein SMALL AUXIN UP-REGULATED RNA 16 (105 aa).

Belongs to the ARG7 family. Expressed in etiolated hypocotyls, cotyledons, leaves, flowers and siliques.

It localises to the cell membrane. In terms of biological role, provide a mechanistic link between auxin and plasma membrane H(+)-ATPases (PM H(+)-ATPases, e.g. AHA1 and AHA2), and triggers PM H(+)-ATPases activity by promoting phosphorylation of their C-terminal autoinhibitory domain as a result of PP2C-D subfamily of type 2C phosphatases inhibition, thus leading to the acidification of the apoplast and the facilitation of solutes and water uptake to drive cell expansion. Triggers plant growth probably by promoting cell elongation. Regulates branch angles and bending. In Arabidopsis thaliana (Mouse-ear cress), this protein is Protein SMALL AUXIN UP-REGULATED RNA 16.